The primary structure comprises 337 residues: MEQPWPPPGPWSLPRAEGEAEEESDLDLSPGSPRCPQLPGGGTQMYSHGIEMACQKQKEFVKSSVACKWNLAEAQQKLGSLALHNSESLDQEHAKAQTAISELRQREEEWRQKEEALVQRERMCLWNMDAISKDVFNKSFINQDKRKETEDEDKSKSFMQKHEQKIRHFGMLSRWDDSQRFLSDHPYLVCEETAKYLILWCFHLEAEQKGALMEQIAHQAVVMQFIMEMAKNCNVDPRGCFRLFFQKAKAEEEGYFEAFKNELEAFKSRVRLYSQSPNFQPVTVQNHVPHSGVGSIGLLESLPQNPDYLQYSINTALCSLNSVVHKEDDEPKMMDTV.

A compositionally biased stretch (pro residues) spans M1–W11. Positions M1–T43 are disordered. The self-association stretch occupies residues E2 to M171. Residues S32 and S88 each carry the phosphoserine modification. Residues H84–R122 are a coiled coil. Residues K147–P277 are self-association and interaction with Hsp90. Positions K267–V337 are interaction with Hsp70. The interval N278–V337 is required for interaction with STIP1.

It belongs to the CDC37 family. Self-associates. Forms complexes with Hsp70 and Hsp90. Interacts with CDC37, FKBP4, PPID and STIP1.

Its subcellular location is the cytoplasm. Co-chaperone that binds to numerous proteins and promotes their interaction with Hsp70 and Hsp90. This Bos taurus (Bovine) protein is Hsp90 co-chaperone Cdc37-like 1 (CDC37L1).